Here is a 604-residue protein sequence, read N- to C-terminus: Putative JmjC domain-containing protein L887 (604 aa).

Residues 1–127 (MNNMKKIIII…PNNKLNLIQP (127 aa)) form the JmjC domain. A helical membrane pass occupies residues 4–24 (MKKIIIISIIIIIIIVLLFYI).

Its subcellular location is the membrane. This Acanthamoeba polyphaga (Amoeba) protein is Putative JmjC domain-containing protein L887.